The primary structure comprises 355 residues: Type II restriction enzyme CfrBI (355 aa).

The catalysed reaction is Endonucleolytic cleavage of DNA to give specific double-stranded fragments with terminal 5'-phosphates.. Functionally, a P subtype restriction enzyme that recognizes the double-stranded sequence 5'-CCWWGG-3' and cleaves after C-1. This Citrobacter freundii protein is Type II restriction enzyme CfrBI.